We begin with the raw amino-acid sequence, 116 residues long: Cyclin-dependent protein kinase inhibitor SMR9 (116 aa).

A compositionally biased stretch (basic residues) spans 1-22 (MASKGKKPLRRTTTRRRKRSHF). The interval 1–62 (MASKGKKPLR…PVSAESGCCT (62 aa)) is disordered. Residues 35 to 56 (VTSTSSTSTSPTSTATPSPVSA) show a composition bias toward low complexity.

Probable cyclin-dependent protein kinase (CDK) inhibitor that functions as a repressor of mitosis in the endoreduplication cell cycle. The protein is Cyclin-dependent protein kinase inhibitor SMR9 of Arabidopsis thaliana (Mouse-ear cress).